The sequence spans 228 residues: 2,3-bisphosphoglycerate-dependent phosphoglycerate mutase (228 aa).

Substrate-binding positions include Arg8–Asn15, Thr21–Gly22, Arg60, Glu87–Tyr90, Lys98, Arg114–Arg115, and Gly180–Asn181. The active-site Tele-phosphohistidine intermediate is the His9. Glu87 acts as the Proton donor/acceptor in catalysis.

This sequence belongs to the phosphoglycerate mutase family. BPG-dependent PGAM subfamily. In terms of assembly, homodimer.

The catalysed reaction is (2R)-2-phosphoglycerate = (2R)-3-phosphoglycerate. Its pathway is carbohydrate degradation; glycolysis; pyruvate from D-glyceraldehyde 3-phosphate: step 3/5. In terms of biological role, catalyzes the interconversion of 2-phosphoglycerate and 3-phosphoglycerate. The protein is 2,3-bisphosphoglycerate-dependent phosphoglycerate mutase of Rhizorhabdus wittichii (strain DSM 6014 / CCUG 31198 / JCM 15750 / NBRC 105917 / EY 4224 / RW1) (Sphingomonas wittichii).